A 370-amino-acid polypeptide reads, in one-letter code: Pantothenate kinase 3 (370 aa).

Residue E138 is the Proton acceptor of the active site. The acetyl-CoA site is built by S192, S195, and R207.

The protein belongs to the type II pantothenate kinase family. In terms of assembly, homodimer.

The protein localises to the cytoplasm. It catalyses the reaction (R)-pantothenate + ATP = (R)-4'-phosphopantothenate + ADP + H(+). Its pathway is cofactor biosynthesis; coenzyme A biosynthesis; CoA from (R)-pantothenate: step 1/5. Its activity is regulated as follows. Subject to allosteric regulation, exists in two distinct conformational states, a catalytically incompetent (or open) conformation stabilized by the binding of acetyl(acyl)-CoA, and a catalytically competent (or closed) conformation stabilized by ATP-binding. Inhibited by acetyl-CoA and its thioesters which act as allosteric inhibitors and compete with the ATP-binding site. In terms of biological role, catalyzes the phosphorylation of pantothenate to generate 4'-phosphopantothenate in the first and rate-determining step of coenzyme A (CoA) synthesis. This chain is Pantothenate kinase 3 (PANK3), found in Bos taurus (Bovine).